The primary structure comprises 93 residues: Large ribosomal subunit protein uL23cz/uL23cy (93 aa).

The protein belongs to the universal ribosomal protein uL23 family. As to quaternary structure, part of the 50S ribosomal subunit.

It is found in the plastid. It localises to the chloroplast. Its function is as follows. Binds to 23S rRNA. This Acorus calamus (Sweet flag) protein is Large ribosomal subunit protein uL23cz/uL23cy (rpl23-A).